Reading from the N-terminus, the 275-residue chain is Dermonecrotic toxin LspiSicTox-betaIE4i (275 aa).

Mg(2+) contacts are provided by E24 and D26. The Nucleophile role is filled by H40. 2 disulfide bridges follow: C44-C50 and C46-C188. D84 provides a ligand contact to Mg(2+).

It belongs to the arthropod phospholipase D family. Class II subfamily. Mg(2+) is required as a cofactor. Expressed by the venom gland.

It is found in the secreted. It carries out the reaction an N-(acyl)-sphingosylphosphocholine = an N-(acyl)-sphingosyl-1,3-cyclic phosphate + choline. The enzyme catalyses an N-(acyl)-sphingosylphosphoethanolamine = an N-(acyl)-sphingosyl-1,3-cyclic phosphate + ethanolamine. The catalysed reaction is a 1-acyl-sn-glycero-3-phosphocholine = a 1-acyl-sn-glycero-2,3-cyclic phosphate + choline. It catalyses the reaction a 1-acyl-sn-glycero-3-phosphoethanolamine = a 1-acyl-sn-glycero-2,3-cyclic phosphate + ethanolamine. Functionally, dermonecrotic toxins cleave the phosphodiester linkage between the phosphate and headgroup of certain phospholipids (sphingolipid and lysolipid substrates), forming an alcohol (often choline) and a cyclic phosphate. This toxin acts on sphingomyelin (SM). It may also act on ceramide phosphoethanolamine (CPE), lysophosphatidylcholine (LPC) and lysophosphatidylethanolamine (LPE), but not on lysophosphatidylserine (LPS), and lysophosphatidylglycerol (LPG). It acts by transphosphatidylation, releasing exclusively cyclic phosphate products as second products. Induces dermonecrosis, hemolysis, increased vascular permeability, edema, inflammatory response, and platelet aggregation. The polypeptide is Dermonecrotic toxin LspiSicTox-betaIE4i (Loxosceles spinulosa (Recluse spider)).